The chain runs to 444 residues: Probable glycine dehydrogenase (decarboxylating) subunit 1 (444 aa).

Belongs to the GcvP family. N-terminal subunit subfamily. As to quaternary structure, the glycine cleavage system is composed of four proteins: P, T, L and H. In this organism, the P 'protein' is a heterodimer of two subunits.

The catalysed reaction is N(6)-[(R)-lipoyl]-L-lysyl-[glycine-cleavage complex H protein] + glycine + H(+) = N(6)-[(R)-S(8)-aminomethyldihydrolipoyl]-L-lysyl-[glycine-cleavage complex H protein] + CO2. In terms of biological role, the glycine cleavage system catalyzes the degradation of glycine. The P protein binds the alpha-amino group of glycine through its pyridoxal phosphate cofactor; CO(2) is released and the remaining methylamine moiety is then transferred to the lipoamide cofactor of the H protein. This chain is Probable glycine dehydrogenase (decarboxylating) subunit 1, found in Chlorobium luteolum (strain DSM 273 / BCRC 81028 / 2530) (Pelodictyon luteolum).